Reading from the N-terminus, the 328-residue chain is Type II secretion system protein K (328 aa).

Residues 1–7 constitute a propeptide, leader sequence; it reads MRSRQRG. The chain crosses the membrane as a helical span at residues 8-28; sequence AALLVVLLILALMVTIAAVIT. At 29-328 the chain is on the periplasmic side; the sequence is ERTGKAFLRT…QYGGYRTVNP (300 aa).

The protein belongs to the GSP K family. As to quaternary structure, type II secretion is composed of four main components: the outer membrane complex, the inner membrane complex, the cytoplasmic secretion ATPase and the periplasm-spanning pseudopilus. Interacts with core component OutG. Cleaved by prepilin peptidase.

The protein localises to the cell inner membrane. Component of the type II secretion system required for the energy-dependent secretion of extracellular factors such as proteases and toxins from the periplasm. Plays a role in pseudopilus assembly and seems to control its length. Interacts with the pseudopilus tip complex that is critical for the recognition and binding of secretion substrates. This is Type II secretion system protein K (outK) from Pectobacterium carotovorum subsp. carotovorum (Erwinia carotovora subsp. carotovora).